The primary structure comprises 145 residues: Maximins 3/H3 type 2 (145 aa).

The first 18 residues, 1–18, serve as a signal peptide directing secretion; it reads MNFKYIVAVSFLIASAYA. 2 consecutive propeptides follow at residues 19–43 and 74–124; these read RSVQ…LREI and RTAE…KEKR. The residue at position 144 (I144) is an Isoleucine amide.

The protein belongs to the bombinin family. Expressed by the skin glands.

It localises to the secreted. Its function is as follows. Maximin-3 shows antibacterial activity against both Gram-positive and Gram-negative bacteria. It also shows antimicrobial activity against the fungus C.albicans, but not against A.flavus nor P.uticale. It has little hemolytic activity. It possess a significant cytotoxicity against tumor cell lines. It possess a significant anti-HIV activity. It shows high spermicidal activity. Functionally, maximin-H3 shows antibacterial activity against both Gram-positive and Gram-negative bacteria. It also shows antimicrobial activity against the fungus C.albicans. Shows strong hemolytic activity. The chain is Maximins 3/H3 type 2 from Bombina maxima (Giant fire-bellied toad).